We begin with the raw amino-acid sequence, 401 residues long: S-adenosylmethionine synthase (401 aa).

Residue 137 to 142 coordinates ATP; sequence GQGSGD.

This sequence belongs to the AdoMet synthase 2 family. Mg(2+) serves as cofactor.

It carries out the reaction L-methionine + ATP + H2O = S-adenosyl-L-methionine + phosphate + diphosphate. It functions in the pathway amino-acid biosynthesis; S-adenosyl-L-methionine biosynthesis; S-adenosyl-L-methionine from L-methionine: step 1/1. Functionally, catalyzes the formation of S-adenosylmethionine from methionine and ATP. The chain is S-adenosylmethionine synthase from Haloquadratum walsbyi (strain DSM 16790 / HBSQ001).